Reading from the N-terminus, the 197-residue chain is Shikimate kinase (197 aa).

14–19 (GSGKST) contacts ATP. Ser-18 is a Mg(2+) binding site. The substrate site is built by Asp-36, Arg-60, and Gly-82. Arg-120 is a binding site for ATP. Substrate is bound at residue Arg-147.

This sequence belongs to the shikimate kinase family. In terms of assembly, monomer. It depends on Mg(2+) as a cofactor.

Its subcellular location is the cytoplasm. It carries out the reaction shikimate + ATP = 3-phosphoshikimate + ADP + H(+). It functions in the pathway metabolic intermediate biosynthesis; chorismate biosynthesis; chorismate from D-erythrose 4-phosphate and phosphoenolpyruvate: step 5/7. Catalyzes the specific phosphorylation of the 3-hydroxyl group of shikimic acid using ATP as a cosubstrate. The chain is Shikimate kinase from Prosthecochloris aestuarii (strain DSM 271 / SK 413).